The primary structure comprises 149 residues: HTH-type transcriptional regulator LrpB (149 aa).

The region spanning 3-64 is the HTH asnC-type domain; sequence IDSIDFQILQ…VVDELKMGFS (62 aa). Residues 22 to 41 constitute a DNA-binding region (H-T-H motif); sequence WKEIGEKIHMTGQAVGNRIK.

In terms of biological role, negative regulation of glyA transcription and kinB-dependent sporulation. The chain is HTH-type transcriptional regulator LrpB (lrpB) from Bacillus subtilis (strain 168).